A 285-amino-acid polypeptide reads, in one-letter code: Transcription factor E2F6 (285 aa).

Residue lysine 9 forms a Glycyl lysine isopeptide (Lys-Gly) (interchain with G-Cter in SUMO2) linkage. A DNA-binding region spans residues 50–129 (YVSMRKALKV…SKNHIRWIGS (80 aa)). The short motif at 95 to 129 (KLGVRKRRVYDITNVLDGIDLVEKKSKNHIRWIGS) is the DEF box element. Residues 130–222 (DLSNFGAVPQ…PAPKEDSITV (93 aa)) are dimerization. A leucine-zipper region spans residues 143–164 (LQEELSDLSAMEDALDELIKDC). The tract at residues 173–285 (DDKENERLAY…QSEEVLEVSN (113 aa)) is transcription repression. The segment at 240-285 (QGSHSSNKTSDNVGTSSSKSKPLEHPQPEKEENPPQQSEEVLEVSN) is disordered. A compositionally biased stretch (polar residues) spans 241–259 (GSHSSNKTSDNVGTSSSKS). The span at 260 to 272 (KPLEHPQPEKEEN) shows a compositional bias: basic and acidic residues.

It belongs to the E2F/DP family. In terms of assembly, forms heterodimers with DP family members TFDP1 or TFDP2. Component of the DRTF1/E2F transcription factor complex. Part of the E2F6.com-1 complex in G0 phase composed of E2F6, MGA, MAX, TFDP1, CBX3, BAT8, EUHMTASE1, RING1, RNF2, MBLR, L3MBTL2 and YAF2. Component of some MLL1/MLL complex, at least composed of the core components KMT2A/MLL1, ASH2L, HCFC1/HCF1, WDR5 and RBBP5, as well as the facultative components BACC1, CHD8, E2F6, HSP70, INO80C, KANSL1, LAS1L, MAX, MCRS1, MGA, KAT8/MOF, PELP1, PHF20, PRP31, RING2, RUVB1/TIP49A, RUVB2/TIP49B, SENP3, TAF1, TAF4, TAF6, TAF7, TAF9 and TEX10.

It is found in the nucleus. Its function is as follows. Inhibitor of E2F-dependent transcription. Binds DNA cooperatively with DP proteins through the E2 recognition site, 5'-TTTC[CG]CGC-3'. Has a preference for the 5'-TTTCCCGC-3' E2F recognition site. E2F6 lacks the transcriptional activation and pocket protein binding domains. Appears to regulate a subset of E2F-dependent genes whose products are required for entry into the cell cycle but not for normal cell cycle progression. Represses expression of some meiosis-specific genes, including SLC25A31/ANT4. May silence expression via the recruitment of a chromatin remodeling complex containing histone H3-K9 methyltransferase activity. Overexpression delays the exit of cells from the S-phase. In Bos taurus (Bovine), this protein is Transcription factor E2F6.